A 223-amino-acid chain; its full sequence is Ribose-5-phosphate isomerase A (223 aa).

Substrate is bound by residues 32-35, 85-88, and 98-101; these read TGST, DGAD, and KGGG. Glu107 acts as the Proton acceptor in catalysis. Lys125 lines the substrate pocket.

It belongs to the ribose 5-phosphate isomerase family. In terms of assembly, homodimer.

The catalysed reaction is aldehydo-D-ribose 5-phosphate = D-ribulose 5-phosphate. Its pathway is carbohydrate degradation; pentose phosphate pathway; D-ribose 5-phosphate from D-ribulose 5-phosphate (non-oxidative stage): step 1/1. Catalyzes the reversible conversion of ribose-5-phosphate to ribulose 5-phosphate. This is Ribose-5-phosphate isomerase A from Pseudomonas syringae pv. tomato (strain ATCC BAA-871 / DC3000).